Here is an 89-residue protein sequence, read N- to C-terminus: Small ribosomal subunit protein uS15 (89 aa).

Positions 1 to 10 are enriched in basic and acidic residues; the sequence is MSITAERKAE. A disordered region spans residues 1–24; sequence MSITAERKAEVIQGNANKAGDTGS.

The protein belongs to the universal ribosomal protein uS15 family. In terms of assembly, part of the 30S ribosomal subunit. Forms a bridge to the 50S subunit in the 70S ribosome, contacting the 23S rRNA.

Its function is as follows. One of the primary rRNA binding proteins, it binds directly to 16S rRNA where it helps nucleate assembly of the platform of the 30S subunit by binding and bridging several RNA helices of the 16S rRNA. Functionally, forms an intersubunit bridge (bridge B4) with the 23S rRNA of the 50S subunit in the ribosome. This is Small ribosomal subunit protein uS15 from Rhodopseudomonas palustris (strain HaA2).